Here is a 245-residue protein sequence, read N- to C-terminus: 1-(5-phosphoribosyl)-5-[(5-phosphoribosylamino)methylideneamino] imidazole-4-carboxamide isomerase (245 aa).

The Proton acceptor role is filled by Asp7. The active-site Proton donor is the Asp129.

It belongs to the HisA/HisF family.

It localises to the cytoplasm. The catalysed reaction is 1-(5-phospho-beta-D-ribosyl)-5-[(5-phospho-beta-D-ribosylamino)methylideneamino]imidazole-4-carboxamide = 5-[(5-phospho-1-deoxy-D-ribulos-1-ylimino)methylamino]-1-(5-phospho-beta-D-ribosyl)imidazole-4-carboxamide. Its pathway is amino-acid biosynthesis; L-histidine biosynthesis; L-histidine from 5-phospho-alpha-D-ribose 1-diphosphate: step 4/9. This chain is 1-(5-phosphoribosyl)-5-[(5-phosphoribosylamino)methylideneamino] imidazole-4-carboxamide isomerase, found in Alteromonas mediterranea (strain DSM 17117 / CIP 110805 / LMG 28347 / Deep ecotype).